The chain runs to 513 residues: ATP synthase subunit alpha (513 aa).

169–176 (GDRQTGKT) serves as a coordination point for ATP.

Belongs to the ATPase alpha/beta chains family. As to quaternary structure, F-type ATPases have 2 components, CF(1) - the catalytic core - and CF(0) - the membrane proton channel. CF(1) has five subunits: alpha(3), beta(3), gamma(1), delta(1), epsilon(1). CF(0) has three main subunits: a(1), b(2) and c(9-12). The alpha and beta chains form an alternating ring which encloses part of the gamma chain. CF(1) is attached to CF(0) by a central stalk formed by the gamma and epsilon chains, while a peripheral stalk is formed by the delta and b chains.

It localises to the cell inner membrane. The enzyme catalyses ATP + H2O + 4 H(+)(in) = ADP + phosphate + 5 H(+)(out). Produces ATP from ADP in the presence of a proton gradient across the membrane. The alpha chain is a regulatory subunit. The polypeptide is ATP synthase subunit alpha (Haemophilus influenzae (strain PittEE)).